A 135-amino-acid chain; its full sequence is Large ribosomal subunit protein bL19 (135 aa).

Belongs to the bacterial ribosomal protein bL19 family.

In terms of biological role, this protein is located at the 30S-50S ribosomal subunit interface and may play a role in the structure and function of the aminoacyl-tRNA binding site. The sequence is that of Large ribosomal subunit protein bL19 from Xanthomonas axonopodis pv. citri (strain 306).